Here is a 250-residue protein sequence, read N- to C-terminus: 2,5-dichloro-2,5-cyclohexadiene-1,4-diol dehydrogenase (250 aa).

9–34 (IIVTGGGSGIGRATVELLVASGANVA) lines the NAD(+) pocket. A substrate-binding site is contributed by serine 141. Tyrosine 154 (proton acceptor) is an active-site residue.

It belongs to the short-chain dehydrogenases/reductases (SDR) family.

The catalysed reaction is 2,5-dichlorocyclohexa-2,5-dien-1,4-diol + NAD(+) = 2,5-dichlorohydroquinone + NADH + H(+). It participates in xenobiotic degradation; gamma-hexachlorocyclohexane degradation. Functionally, catalyzes the dehydrogenation of 2,5-dichloro-2,5-cyclohexadiene-1,4-diol (2,5-DDOL) to 2,5-dichlorohydroquinone (2,5-DCHQ), a step in the degradation of gamma-hexachlorocyclohexane (gamma-HCH or lindane). In Sphingobium indicum (strain DSM 16412 / CCM 7286 / MTCC 6364 / B90A), this protein is 2,5-dichloro-2,5-cyclohexadiene-1,4-diol dehydrogenase.